The sequence spans 552 residues: Putative transport protein PBPRA2144 (552 aa).

A run of 5 helical transmembrane segments spans residues 4-24, 26-46, 65-85, 95-115, and 158-178; these read IALS…IGNW, ICGV…VGHF, FGLI…FFAS, AFAA…YKIF, and MGYA…MWIL. RCK C-terminal domains follow at residues 188–276 and 279–361; these read KEAE…VIGE and DASL…IVGN. 6 consecutive transmembrane segments (helical) span residues 371–391, 394–414, 439–459, 464–484, 493–513, and 532–552; these read MLPV…PFYL, FPAA…LILA, IVLF…DTLV, LSWM…VGFL, YLTI…LAFA, and PLVM…LWAV.

This sequence belongs to the AAE transporter (TC 2.A.81) family. YidE subfamily.

It is found in the cell membrane. The polypeptide is Putative transport protein PBPRA2144 (Photobacterium profundum (strain SS9)).